A 283-amino-acid polypeptide reads, in one-letter code: Thymidylate synthase (283 aa).

Arg22 is a binding site for dUMP. The active-site Nucleophile is the Cys160. DUMP contacts are provided by residues 180–183 (RSCD), Asn191, and 221–223 (HIY). Position 183 (Asp183) interacts with (6R)-5,10-methylene-5,6,7,8-tetrahydrofolate. Ser282 serves as a coordination point for (6R)-5,10-methylene-5,6,7,8-tetrahydrofolate.

Belongs to the thymidylate synthase family. Bacterial-type ThyA subfamily. In terms of assembly, homodimer.

The protein resides in the cytoplasm. The catalysed reaction is dUMP + (6R)-5,10-methylene-5,6,7,8-tetrahydrofolate = 7,8-dihydrofolate + dTMP. The protein operates within pyrimidine metabolism; dTTP biosynthesis. Functionally, catalyzes the reductive methylation of 2'-deoxyuridine-5'-monophosphate (dUMP) to 2'-deoxythymidine-5'-monophosphate (dTMP) while utilizing 5,10-methylenetetrahydrofolate (mTHF) as the methyl donor and reductant in the reaction, yielding dihydrofolate (DHF) as a by-product. This enzymatic reaction provides an intracellular de novo source of dTMP, an essential precursor for DNA biosynthesis. The chain is Thymidylate synthase from Pasteurella multocida (strain Pm70).